We begin with the raw amino-acid sequence, 310 residues long: Beta-ketoacyl-[acyl-carrier-protein] synthase III (310 aa).

Active-site residues include cysteine 116 and histidine 239. The interval 240–244 (QANYR) is ACP-binding. The active site involves asparagine 269.

This sequence belongs to the thiolase-like superfamily. FabH family. As to quaternary structure, homodimer.

The protein resides in the cytoplasm. The catalysed reaction is malonyl-[ACP] + acetyl-CoA + H(+) = 3-oxobutanoyl-[ACP] + CO2 + CoA. It participates in lipid metabolism; fatty acid biosynthesis. In terms of biological role, catalyzes the condensation reaction of fatty acid synthesis by the addition to an acyl acceptor of two carbons from malonyl-ACP. Catalyzes the first condensation reaction which initiates fatty acid synthesis and may therefore play a role in governing the total rate of fatty acid production. Possesses both acetoacetyl-ACP synthase and acetyl transacylase activities. Its substrate specificity determines the biosynthesis of branched-chain and/or straight-chain of fatty acids. This chain is Beta-ketoacyl-[acyl-carrier-protein] synthase III, found in Acholeplasma laidlawii (strain PG-8A).